The primary structure comprises 221 residues: Thiamine-phosphate synthase (221 aa).

4-amino-2-methyl-5-(diphosphooxymethyl)pyrimidine-binding positions include 46–50 (QFREK) and Asn82. Asp83 and Asp102 together coordinate Mg(2+). Ser121 lines the 4-amino-2-methyl-5-(diphosphooxymethyl)pyrimidine pocket. 148 to 150 (TQS) contributes to the 2-[(2R,5Z)-2-carboxy-4-methylthiazol-5(2H)-ylidene]ethyl phosphate binding site. Position 151 (Lys151) interacts with 4-amino-2-methyl-5-(diphosphooxymethyl)pyrimidine. 2-[(2R,5Z)-2-carboxy-4-methylthiazol-5(2H)-ylidene]ethyl phosphate is bound by residues Gly180 and 200–201 (IS).

The protein belongs to the thiamine-phosphate synthase family. Mg(2+) is required as a cofactor.

It carries out the reaction 2-[(2R,5Z)-2-carboxy-4-methylthiazol-5(2H)-ylidene]ethyl phosphate + 4-amino-2-methyl-5-(diphosphooxymethyl)pyrimidine + 2 H(+) = thiamine phosphate + CO2 + diphosphate. The enzyme catalyses 2-(2-carboxy-4-methylthiazol-5-yl)ethyl phosphate + 4-amino-2-methyl-5-(diphosphooxymethyl)pyrimidine + 2 H(+) = thiamine phosphate + CO2 + diphosphate. The catalysed reaction is 4-methyl-5-(2-phosphooxyethyl)-thiazole + 4-amino-2-methyl-5-(diphosphooxymethyl)pyrimidine + H(+) = thiamine phosphate + diphosphate. The protein operates within cofactor biosynthesis; thiamine diphosphate biosynthesis; thiamine phosphate from 4-amino-2-methyl-5-diphosphomethylpyrimidine and 4-methyl-5-(2-phosphoethyl)-thiazole: step 1/1. Its function is as follows. Condenses 4-methyl-5-(beta-hydroxyethyl)thiazole monophosphate (THZ-P) and 2-methyl-4-amino-5-hydroxymethyl pyrimidine pyrophosphate (HMP-PP) to form thiamine monophosphate (TMP). This chain is Thiamine-phosphate synthase, found in Pasteurella multocida (strain Pm70).